The primary structure comprises 378 residues: MKFVDEATIEVIAGKGGNGVASFRREKFIPKGGPDGGDGGRGGSIYAVADRNINTLIDFRYARLHRAKNGENGRGSDQYGAAAPDITLRVPVGTVVHDADTGELLFDLNRHGEKVTLAAGGQGGMGNLHFKSSTNRAPRQWTPGKEGEQRRLRLELKVLADVGLLGLPNAGKSTLISRISNARPKVADYPFTTLHPNLGVVRTSASRSFVVADIPGLIEGASEGAGLGHLFLRHLARTRVLLHLVDISSPDPDTDPIEQAVADARAIVEELRRYDPELADKPRWLVLNKLDMVADPDAARQRFVEQFSWQGPVFVISGLNGDGTQELIWALQDYLDAEQRKANLAQDQADGTYVAEDPRFDATRSDAAPPGAPRGGDE.

Positions 1 to 159 constitute an Obg domain; the sequence is MKFVDEATIE…RRLRLELKVL (159 aa). Residues 160–336 form the OBG-type G domain; sequence ADVGLLGLPN…LIWALQDYLD (177 aa). Residues 166–173, 191–195, 213–216, 288–291, and 317–319 each bind GTP; these read GLPNAGKS, FTTLH, DIPG, NKLD, and SGL. Mg(2+) contacts are provided by serine 173 and threonine 193. The tract at residues 345–378 is disordered; it reads AQDQADGTYVAEDPRFDATRSDAAPPGAPRGGDE.

It belongs to the TRAFAC class OBG-HflX-like GTPase superfamily. OBG GTPase family. Monomer. It depends on Mg(2+) as a cofactor.

Its subcellular location is the cytoplasm. In terms of biological role, an essential GTPase which binds GTP, GDP and possibly (p)ppGpp with moderate affinity, with high nucleotide exchange rates and a fairly low GTP hydrolysis rate. Plays a role in control of the cell cycle, stress response, ribosome biogenesis and in those bacteria that undergo differentiation, in morphogenesis control. The polypeptide is GTPase Obg (Bordetella petrii (strain ATCC BAA-461 / DSM 12804 / CCUG 43448)).